A 1019-amino-acid polypeptide reads, in one-letter code: UPF0182 protein Krad_1193 (1019 aa).

The next 7 membrane-spanning stretches (helical) occupy residues 19-39, 61-81, 115-135, 169-189, 213-233, 264-284, and 291-311; these read GAALPTVVILVAVVIAVVVGA, LWLQVLLFTLGALLLAAAVAV, RLVVVVLSAAAGLFGGSVAMS, WLAFLVSFLTAAVVLAGIAGL, VHLASLAAAFLLLRAAGYWLD, AILALIAVVVALLFVAAAVGT, and IGTGLLVVSAIAIGGIYPWAV. 2 disordered regions span residues 897–934 and 977–1019; these read GNSGAGAGDEGAPPPTAGTPAPTDGATGGPAPDPATGD and DAAS…TPTP. Over residues 977 to 1005 the composition is skewed to low complexity; that stretch reads DAASAAEARLERSGTSGPTSSSSPSASSA. A compositionally biased stretch (pro residues) spans 1006 to 1019; that stretch reads PPVPGETPAATPTP.

Belongs to the UPF0182 family.

The protein localises to the cell membrane. The protein is UPF0182 protein Krad_1193 of Kineococcus radiotolerans (strain ATCC BAA-149 / DSM 14245 / SRS30216).